We begin with the raw amino-acid sequence, 408 residues long: GDSL esterase/lipase At1g54790 (408 aa).

The signal sequence occupies residues 1-24; it reads MNITKMKLFYVILFFISSLQISNS. Catalysis depends on serine 38, which acts as the Nucleophile. N-linked (GlcNAc...) asparagine glycans are attached at residues asparagine 273, asparagine 289, and asparagine 361. Active-site residues include aspartate 370 and histidine 373.

This sequence belongs to the 'GDSL' lipolytic enzyme family.

The protein localises to the secreted. This Arabidopsis thaliana (Mouse-ear cress) protein is GDSL esterase/lipase At1g54790.